A 490-amino-acid polypeptide reads, in one-letter code: Probable cytosol aminopeptidase (490 aa).

Residues K256 and D261 each coordinate Mn(2+). Residue K268 is part of the active site. 3 residues coordinate Mn(2+): D280, D340, and E342. Residue R344 is part of the active site.

The protein belongs to the peptidase M17 family. The cofactor is Mn(2+).

The protein localises to the cytoplasm. The enzyme catalyses Release of an N-terminal amino acid, Xaa-|-Yaa-, in which Xaa is preferably Leu, but may be other amino acids including Pro although not Arg or Lys, and Yaa may be Pro. Amino acid amides and methyl esters are also readily hydrolyzed, but rates on arylamides are exceedingly low.. The catalysed reaction is Release of an N-terminal amino acid, preferentially leucine, but not glutamic or aspartic acids.. Its function is as follows. Presumably involved in the processing and regular turnover of intracellular proteins. Catalyzes the removal of unsubstituted N-terminal amino acids from various peptides. This Prochlorococcus marinus (strain MIT 9313) protein is Probable cytosol aminopeptidase.